The primary structure comprises 391 residues: Oocyte zinc finger protein XlCOF7.2 (391 aa).

C2H2-type zinc fingers lie at residues 284 to 306 (FPCS…YRTH), 312 to 334 (YPCS…RRIH), 340 to 362 (SSCS…HRTH), and 368 to 391 (YSCS…RRTH).

The protein belongs to the krueppel C2H2-type zinc-finger protein family.

Its subcellular location is the nucleus. May be involved in transcriptional regulation. In Xenopus laevis (African clawed frog), this protein is Oocyte zinc finger protein XlCOF7.2.